The chain runs to 260 residues: MLDKVKNVIVVLSGKGGVGKSTVSTQLSLALRKNGFKVGLLDIDLCGPSVPYLLGLEGRDIFQCDEGWVPVYTDESQTLAVMSIGFLLKNREDPVIWRGPKKTMMIRQFLTDVRWDELDYLIIDTPPGTSDEHITVMECLKEVGCHGAIIVTTPQEVALDDVRKEITFCKKTGINILGIVENMSGFVCPHCTSCTNIFSSNGGVSLATYAQVPHLGTLPIDPRVGVLAGTTTSVLDELPDSTTAEVLTHLVEKLKTMLVS.

14–21 (GKGGVGKS) lines the ATP pocket. [4Fe-4S] cluster-binding residues include cysteine 188 and cysteine 191.

It belongs to the Mrp/NBP35 ATP-binding proteins family. NUBP2/CFD1 subfamily. As to quaternary structure, heterotetramer of 2 Nubp1 and 2 Nubp2 chains. It depends on [4Fe-4S] cluster as a cofactor.

It is found in the cytoplasm. Its function is as follows. Component of the cytosolic iron-sulfur (Fe/S) protein assembly (CIA) machinery. Required for maturation of extramitochondrial Fe-S proteins. The Nubp1-Nubp2 heterotetramer forms a Fe-S scaffold complex, mediating the de novo assembly of an Fe-S cluster and its transfer to target apoproteins. In Drosophila sechellia (Fruit fly), this protein is Cytosolic Fe-S cluster assembly factor Nubp2 homolog.